Reading from the N-terminus, the 178-residue chain is Heavy metal-associated isoprenylated plant protein 30 (178 aa).

Positions 45–108 (LQTIDLKVRM…AVRRAGKRAE (64 aa)) constitute an HMA domain. 2 residues coordinate a metal cation: Cys56 and Cys59. Residue Cys175 is modified to Cysteine methyl ester. The S-farnesyl cysteine moiety is linked to residue Cys175. The propeptide at 176–178 (SLM) is removed in mature form.

The protein belongs to the HIPP family. As to quaternary structure, interacts with ZHD3/HB21, ZHD11/HB29 and ZHD8/HB30.

Functionally, heavy-metal-binding protein. The protein is Heavy metal-associated isoprenylated plant protein 30 of Arabidopsis thaliana (Mouse-ear cress).